The chain runs to 302 residues: UDP-N-acetylenolpyruvoylglucosamine reductase (302 aa).

Residues 31 to 210 (IGGQTKVYFR…ENEVLELKKK (180 aa)) enclose the FAD-binding PCMH-type domain. Residue Arg175 is part of the active site. The active-site Proton donor is the Ser224. Residue Glu297 is part of the active site.

Belongs to the MurB family. FAD is required as a cofactor.

It is found in the cytoplasm. The catalysed reaction is UDP-N-acetyl-alpha-D-muramate + NADP(+) = UDP-N-acetyl-3-O-(1-carboxyvinyl)-alpha-D-glucosamine + NADPH + H(+). It participates in cell wall biogenesis; peptidoglycan biosynthesis. Functionally, cell wall formation. This Pelagibacter ubique (strain HTCC1062) protein is UDP-N-acetylenolpyruvoylglucosamine reductase.